Reading from the N-terminus, the 315-residue chain is Ribosomal RNA small subunit methyltransferase H (315 aa).

S-adenosyl-L-methionine is bound by residues 33–35 (GGH), D52, F84, D106, and Q113. The interval 294-315 (SSDELEENNRSHSAKLRVAEKL) is disordered.

Belongs to the methyltransferase superfamily. RsmH family.

The protein resides in the cytoplasm. It catalyses the reaction cytidine(1402) in 16S rRNA + S-adenosyl-L-methionine = N(4)-methylcytidine(1402) in 16S rRNA + S-adenosyl-L-homocysteine + H(+). In terms of biological role, specifically methylates the N4 position of cytidine in position 1402 (C1402) of 16S rRNA. The polypeptide is Ribosomal RNA small subunit methyltransferase H (Lactobacillus johnsonii (strain CNCM I-12250 / La1 / NCC 533)).